A 62-amino-acid polypeptide reads, in one-letter code: Photosystem II reaction center protein Z (62 aa).

A run of 2 helical transmembrane segments spans residues 8–28 (AVFA…VVLA) and 41–61 (FSGA…NSFI).

Belongs to the PsbZ family. In terms of assembly, PSII is composed of 1 copy each of membrane proteins PsbA, PsbB, PsbC, PsbD, PsbE, PsbF, PsbH, PsbI, PsbJ, PsbK, PsbL, PsbM, PsbT, PsbY, PsbZ, Psb30/Ycf12, at least 3 peripheral proteins of the oxygen-evolving complex and a large number of cofactors. It forms dimeric complexes.

It is found in the plastid. The protein localises to the chloroplast thylakoid membrane. May control the interaction of photosystem II (PSII) cores with the light-harvesting antenna, regulates electron flow through the 2 photosystem reaction centers. PSII is a light-driven water plastoquinone oxidoreductase, using light energy to abstract electrons from H(2)O, generating a proton gradient subsequently used for ATP formation. The sequence is that of Photosystem II reaction center protein Z from Anthoceros angustus (Hornwort).